The primary structure comprises 374 residues: bZIP transcription factor TRAB1 (374 aa).

Positions 1–13 (MDLKDGGGSERRG) are enriched in basic and acidic residues. Disordered regions lie at residues 1-23 (MDLK…AGAA) and 117-142 (ASPG…QPTL). The segment covering 14 to 23 (AAAGAGAGAA) has biased composition (low complexity). The 64-residue stretch at 286–349 (VERRQRRMIK…KNFFPEMQKN (64 aa)) folds into the bZIP domain. A basic motif region spans residues 288-307 (RRQRRMIKNRESAARSRARK). The leucine-zipper stretch occupies residues 314 to 335 (LEAEVQKLKEQNMELQKKQEEI).

The protein belongs to the bZIP family. As to quaternary structure, interacts with VP1 (via N-terminus). Expressed in roots, leaves and embryos.

The protein resides in the nucleus. Transcription activator that mediates abscisic acid (ABA) signaling. Binds specifically to the ABA-responsive element (ABRE) of the EMP1 and RAB16A gene promoters. In Oryza sativa subsp. japonica (Rice), this protein is bZIP transcription factor TRAB1.